Reading from the N-terminus, the 399-residue chain is Exodeoxyribonuclease 7 large subunit (399 aa).

The protein belongs to the XseA family. In terms of assembly, heterooligomer composed of large and small subunits.

The protein localises to the cytoplasm. The catalysed reaction is Exonucleolytic cleavage in either 5'- to 3'- or 3'- to 5'-direction to yield nucleoside 5'-phosphates.. In terms of biological role, bidirectionally degrades single-stranded DNA into large acid-insoluble oligonucleotides, which are then degraded further into small acid-soluble oligonucleotides. The chain is Exodeoxyribonuclease 7 large subunit from Clostridium beijerinckii (strain ATCC 51743 / NCIMB 8052) (Clostridium acetobutylicum).